The sequence spans 200 residues: Small ribosomal subunit protein uS4 (200 aa).

The segment at 22–41 is disordered; that stretch reads TGKEIEKRPYAPGQHGPNQR. Positions 92–152 constitute an S4 RNA-binding domain; it reads TRLDNLVYRL…EKSQNLAVVG (61 aa).

It belongs to the universal ribosomal protein uS4 family. Part of the 30S ribosomal subunit. Contacts protein S5. The interaction surface between S4 and S5 is involved in control of translational fidelity.

Its function is as follows. One of the primary rRNA binding proteins, it binds directly to 16S rRNA where it nucleates assembly of the body of the 30S subunit. In terms of biological role, with S5 and S12 plays an important role in translational accuracy. This Lysinibacillus sphaericus (strain C3-41) protein is Small ribosomal subunit protein uS4.